Here is a 669-residue protein sequence, read N- to C-terminus: Translation factor GUF1, mitochondrial (669 aa).

A mitochondrion-targeting transit peptide spans 1-49 (MWTLAGQGWWRGRALAAWVTEAARKGLLWPHLAPARGTAAESRAPDRCY). A tr-type G domain is found at 66-247 (ENTRNFSIIA…AVIKRIPFPK (182 aa)). Residues 75–82 (AHVDHGKS), 140–144 (DTPGH), and 194–197 (NKID) contribute to the GTP site.

Belongs to the TRAFAC class translation factor GTPase superfamily. Classic translation factor GTPase family. LepA subfamily.

Its subcellular location is the mitochondrion inner membrane. The catalysed reaction is GTP + H2O = GDP + phosphate + H(+). Functionally, promotes mitochondrial protein synthesis. May act as a fidelity factor of the translation reaction, by catalyzing a one-codon backward translocation of tRNAs on improperly translocated ribosomes. Binds to mitochondrial ribosomes in a GTP-dependent manner. The polypeptide is Translation factor GUF1, mitochondrial (Bos taurus (Bovine)).